A 95-amino-acid polypeptide reads, in one-letter code: Aspartyl/glutamyl-tRNA(Asn/Gln) amidotransferase subunit C (95 aa).

Belongs to the GatC family. Heterotrimer of A, B and C subunits.

The catalysed reaction is L-glutamyl-tRNA(Gln) + L-glutamine + ATP + H2O = L-glutaminyl-tRNA(Gln) + L-glutamate + ADP + phosphate + H(+). The enzyme catalyses L-aspartyl-tRNA(Asn) + L-glutamine + ATP + H2O = L-asparaginyl-tRNA(Asn) + L-glutamate + ADP + phosphate + 2 H(+). Its function is as follows. Allows the formation of correctly charged Asn-tRNA(Asn) or Gln-tRNA(Gln) through the transamidation of misacylated Asp-tRNA(Asn) or Glu-tRNA(Gln) in organisms which lack either or both of asparaginyl-tRNA or glutaminyl-tRNA synthetases. The reaction takes place in the presence of glutamine and ATP through an activated phospho-Asp-tRNA(Asn) or phospho-Glu-tRNA(Gln). This is Aspartyl/glutamyl-tRNA(Asn/Gln) amidotransferase subunit C from Bartonella bacilliformis (strain ATCC 35685 / KC583 / Herrer 020/F12,63).